The primary structure comprises 244 residues: Ribonuclease PH (244 aa).

Phosphate is bound by residues R90 and 128 to 130; that span reads GTR.

It belongs to the RNase PH family. As to quaternary structure, homohexameric ring arranged as a trimer of dimers.

It carries out the reaction tRNA(n+1) + phosphate = tRNA(n) + a ribonucleoside 5'-diphosphate. Functionally, phosphorolytic 3'-5' exoribonuclease that plays an important role in tRNA 3'-end maturation. Removes nucleotide residues following the 3'-CCA terminus of tRNAs; can also add nucleotides to the ends of RNA molecules by using nucleoside diphosphates as substrates, but this may not be physiologically important. Probably plays a role in initiation of 16S rRNA degradation (leading to ribosome degradation) during starvation. The polypeptide is Ribonuclease PH (Cutibacterium acnes (strain DSM 16379 / KPA171202) (Propionibacterium acnes)).